The sequence spans 800 residues: Putative antiporter subunit mnhA2 (800 aa).

21 consecutive transmembrane segments (helical) span residues 3-23 (LVYL…TLFI), 29-49 (FAGY…LAQI), 78-98 (GLGL…FFYA), 109-129 (LPRF…IVVS), 133-153 (ILMY…ISYW), 167-187 (FIIT…LYII), 202-222 (SISE…GAFT), 249-269 (SATM…ILGL), 273-293 (YIYI…VTAL), 300-320 (GILA…VGLG), 337-357 (LILF…CALF), 387-407 (LVMT…GFLS), 428-448 (LTII…VYAV), 472-492 (PWLF…IFFI), 527-547 (GVNL…ILAL), 596-616 (IITV…VGLP), 627-647 (GPLE…LVFI), 651-671 (LTMV…FLLM), 676-696 (LALT…VSFS), 712-732 (TIKI…IFIA), and 768-788 (LDTM…YTLL).

This sequence belongs to the CPA3 antiporters (TC 2.A.63) subunit A family. In terms of assembly, may form a heterooligomeric complex that consists of seven subunits: mnhA2, mnhB2, mnhC2, mnhD2, mnhE2, mnhF2 and mnhG2.

It is found in the cell membrane. In Staphylococcus haemolyticus (strain JCSC1435), this protein is Putative antiporter subunit mnhA2 (mnhA2).